A 500-amino-acid polypeptide reads, in one-letter code: Replication factor C large subunit (500 aa).

An ATP-binding site is contributed by 44–51 (GSPGVGKT). A disordered region spans residues 443–500 (HAADDLGASDGETTNASGTASSSGDDGDADGTTDGDGSDANDGNDDDDDGQAGLSDFV). The span at 455–466 (TTNASGTASSSG) shows a compositional bias: low complexity. Residues 467-492 (DDGDADGTTDGDGSDANDGNDDDDDG) show a composition bias toward acidic residues.

It belongs to the activator 1 small subunits family. RfcL subfamily. Heteromultimer composed of small subunits (RfcS) and large subunits (RfcL).

Its function is as follows. Part of the RFC clamp loader complex which loads the PCNA sliding clamp onto DNA. In Halorubrum lacusprofundi (strain ATCC 49239 / DSM 5036 / JCM 8891 / ACAM 34), this protein is Replication factor C large subunit.